Here is a 288-residue protein sequence, read N- to C-terminus: Glucose-1-phosphate thymidylyltransferase (288 aa).

Gly-8 serves as a coordination point for dTDP-alpha-D-glucose. Residues Gly-8, Gly-11, Thr-12, Arg-13, Lys-23, Gln-24, Gln-80, Gly-85, and Asp-108 each contribute to the dTTP site. Lys-23, Gln-24, Gln-80, Gly-85, Asp-108, Asn-109, Gly-143, Glu-158, Lys-159, Val-169, and Asp-222 together coordinate dTDP-alpha-D-glucose. Residue Asp-108 participates in Mg(2+) binding. Asp-222 provides a ligand contact to Mg(2+).

It belongs to the glucose-1-phosphate thymidylyltransferase family. It depends on Mg(2+) as a cofactor.

The catalysed reaction is dTTP + alpha-D-glucose 1-phosphate + H(+) = dTDP-alpha-D-glucose + diphosphate. Its pathway is carbohydrate biosynthesis; dTDP-L-rhamnose biosynthesis. Its function is as follows. Catalyzes the conversion of glucose-1-phosphate and dTTP to dTDP-glucose and pyrophosphate. Involved in the biosynthesis of the dTDP-L-rhamnose which is a component of the critical linker, D-N-acetylglucosamine-L-rhamnose disaccharide, which connects the galactan region of arabinogalactan to peptidoglycan via a phosphodiester linkage. This is Glucose-1-phosphate thymidylyltransferase (rmlA) from Mycolicibacterium smegmatis (strain ATCC 700084 / mc(2)155) (Mycobacterium smegmatis).